A 65-amino-acid polypeptide reads, in one-letter code: Small hydrophobic protein (65 aa).

Topologically, residues 1 to 20 (MGNTSITIEFTSKFWPYFTL) are intravirion. The interaction with host BCAP31 stretch occupies residues 6 to 15 (ITIEFTSKFW). Residues 21–44 (IHMILTPISLLIIITIMIAILNKL) form a helical; Signal-anchor for type II membrane protein membrane-spanning segment. The tract at residues 38 to 43 (IAILNK) is interaction with small-molecule inhibitor. The Virion surface segment spans residues 45-65 (SEHKTFCNKTLELGQMYQINT). The N-linked (GlcNAc...) asparagine; by host glycan is linked to Asn-52.

Belongs to the orthopneumovirus small hydrophobic protein family. In terms of assembly, homopentamer forming a funnel-like pore. Interacts with glycoprotein G; this interaction occurs on the surface of virion particles and infected cells. Interacts with host BCAP31 (via C-terminus); this interaction is direct. In terms of processing, four species of SH have been detected in infected cell cytoplasm: a 7.5 kDa non-glycosylated form (SH0), a 13-15 kDa form that contains one or two N-linked carbohydrate side chains of the high-mannose type (SHg), a 21-30 kDa polylactosaminoglycan-modified form of the protein (SHp), and the isoform generated by alternative translational initiation. Of these different forms, SH0 is by far the most abundant protein detected during virus infection. Post-translationally, tyrosine phosphorylated.

It is found in the virion membrane. Its subcellular location is the host cell membrane. It localises to the host Golgi apparatus membrane. The protein resides in the host endoplasmic reticulum membrane. With respect to regulation, channel activity is inhibited by copper. Also inhibited by small-molecule pyronin B. Its function is as follows. Viroporin that forms a homopentameric ion channel displaying low ion selectivity. May play a role in virus morphogenesis and pathogenicity at various stages of the viral life cycle. Accumulates at the membrane of the Golgi apparatus in infected cells and may facilitate virus release by modifying the secretory pathway. May enhance host membrane permeability and disrupt cellular ion homeostasis, which can be sensed as damage-associated molecular patterns/danger signals, triggering NLRP3 inflammasome activation and inflammatory immune response. Also inhibits host TNFA-mediated signaling pathway and may delay apoptosis, allowing time for the virus to replicate. The polypeptide is Small hydrophobic protein (Human respiratory syncytial virus B (strain 18537)).